We begin with the raw amino-acid sequence, 74 residues long: Antimicrobial peptide 1 (74 aa).

The signal sequence occupies residues 1–22; that stretch reads MEIKYLLTVFLVLLIGSDYCQA. K40 is subject to Lysine amide. The propeptide occupies 46 to 74; sequence DLDGQIDRSRNFRKRDAELEELLSKLPIY.

In terms of tissue distribution, expressed by the venom gland.

It is found in the secreted. It localises to the target cell membrane. Its function is as follows. Has antibacterial activity against the Gram-positive bacteria S.aureus (MIC=20 uM), the Gram-negative bacteria E.coli (MIC=150 uM), and the yeast C.albicans (MIC=64 uM). Causes hemolysis on horse erythrocytes. The sequence is that of Antimicrobial peptide 1 from Androctonus amoreuxi (African fattail scorpion).